The primary structure comprises 282 residues: Probable endonuclease 4 (282 aa).

Zn(2+) is bound by residues His66, His106, Glu143, Asp177, His180, His214, Asp227, His229, and Glu259.

The protein belongs to the AP endonuclease 2 family. Zn(2+) serves as cofactor.

It catalyses the reaction Endonucleolytic cleavage to 5'-phosphooligonucleotide end-products.. Its function is as follows. Endonuclease IV plays a role in DNA repair. It cleaves phosphodiester bonds at apurinic or apyrimidinic (AP) sites, generating a 3'-hydroxyl group and a 5'-terminal sugar phosphate. This Nitratidesulfovibrio vulgaris (strain ATCC 29579 / DSM 644 / CCUG 34227 / NCIMB 8303 / VKM B-1760 / Hildenborough) (Desulfovibrio vulgaris) protein is Probable endonuclease 4.